The following is a 430-amino-acid chain: tRNA(Ile)-lysidine synthase (430 aa).

ATP is bound at residue 21–26 (SGGLDS).

Belongs to the tRNA(Ile)-lysidine synthase family.

It localises to the cytoplasm. The catalysed reaction is cytidine(34) in tRNA(Ile2) + L-lysine + ATP = lysidine(34) in tRNA(Ile2) + AMP + diphosphate + H(+). Ligates lysine onto the cytidine present at position 34 of the AUA codon-specific tRNA(Ile) that contains the anticodon CAU, in an ATP-dependent manner. Cytidine is converted to lysidine, thus changing the amino acid specificity of the tRNA from methionine to isoleucine. This is tRNA(Ile)-lysidine synthase from Salmonella dublin (strain CT_02021853).